The following is a 214-amino-acid chain: Thymidylate kinase (214 aa).

Residue 7-14 participates in ATP binding; that stretch reads GVDGAGKR. Residues Asp-9, Tyr-39, Phe-70, Arg-74, Arg-95, Asn-100, and Tyr-103 each coordinate dTMP. Asp-9 lines the Mg(2+) pocket. Residues 147–159 are LID; it reads GERSRGRAQRDPG. DTMP-binding residues include Asp-163 and Tyr-165. Glu-166 serves as a coordination point for Mg(2+).

This sequence belongs to the thymidylate kinase family. In terms of assembly, homodimer. It depends on Mg(2+) as a cofactor.

The enzyme catalyses dTMP + ATP = dTDP + ADP. It functions in the pathway pyrimidine metabolism; dTTP biosynthesis. Functionally, catalyzes the reversible phosphorylation of deoxythymidine monophosphate (dTMP) to deoxythymidine diphosphate (dTDP), using ATP as its preferred phosphoryl donor. Situated at the junction of both de novo and salvage pathways of deoxythymidine triphosphate (dTTP) synthesis, is essential for DNA synthesis and cellular growth. This is Thymidylate kinase (tmk) from Mycobacterium tuberculosis (strain CDC 1551 / Oshkosh).